A 508-amino-acid polypeptide reads, in one-letter code: Photosystem II CP47 reaction center protein (508 aa).

Transmembrane regions (helical) follow at residues 21-36 (SVHI…WAGS), 101-115 (IVFS…IWHW), 140-156 (GIHL…FGAF), 203-218 (IAAG…FHLS), 237-252 (VLSS…AFVV), and 457-472 (SFAL…HGAR).

This sequence belongs to the PsbB/PsbC family. PsbB subfamily. As to quaternary structure, PSII is composed of 1 copy each of membrane proteins PsbA, PsbB, PsbC, PsbD, PsbE, PsbF, PsbH, PsbI, PsbJ, PsbK, PsbL, PsbM, PsbT, PsbX, PsbY, PsbZ, Psb30/Ycf12, at least 3 peripheral proteins of the oxygen-evolving complex and a large number of cofactors. It forms dimeric complexes. Binds multiple chlorophylls. PSII binds additional chlorophylls, carotenoids and specific lipids. serves as cofactor.

Its subcellular location is the plastid. The protein localises to the chloroplast thylakoid membrane. Functionally, one of the components of the core complex of photosystem II (PSII). It binds chlorophyll and helps catalyze the primary light-induced photochemical processes of PSII. PSII is a light-driven water:plastoquinone oxidoreductase, using light energy to abstract electrons from H(2)O, generating O(2) and a proton gradient subsequently used for ATP formation. The chain is Photosystem II CP47 reaction center protein from Lactuca sativa (Garden lettuce).